A 288-amino-acid chain; its full sequence is uncharacterized protein (288 aa).

NAD(+) contacts are provided by residues 6–20 (GFIGLGVMGKSMASH) and Thr97. Lys172 is a catalytic residue. Lys240 provides a ligand contact to NAD(+).

This sequence belongs to the HIBADH-related family.

The protein resides in the cell membrane. Its subcellular location is the membrane raft. This is an uncharacterized protein from Bacillus subtilis (strain 168).